Here is a 217-residue protein sequence, read N- to C-terminus: Ribosomal RNA large subunit methyltransferase E (217 aa).

The S-adenosyl-L-methionine site is built by glycine 71, tryptophan 73, aspartate 91, aspartate 107, and aspartate 132. Residue lysine 172 is the Proton acceptor of the active site.

This sequence belongs to the class I-like SAM-binding methyltransferase superfamily. RNA methyltransferase RlmE family.

It is found in the cytoplasm. It catalyses the reaction uridine(2552) in 23S rRNA + S-adenosyl-L-methionine = 2'-O-methyluridine(2552) in 23S rRNA + S-adenosyl-L-homocysteine + H(+). Specifically methylates the uridine in position 2552 of 23S rRNA at the 2'-O position of the ribose in the fully assembled 50S ribosomal subunit. This Psychromonas ingrahamii (strain DSM 17664 / CCUG 51855 / 37) protein is Ribosomal RNA large subunit methyltransferase E.